Here is a 560-residue protein sequence, read N- to C-terminus: DNA ligase B (560 aa).

The N6-AMP-lysine intermediate role is filled by lysine 124.

This sequence belongs to the NAD-dependent DNA ligase family. LigB subfamily.

It catalyses the reaction NAD(+) + (deoxyribonucleotide)n-3'-hydroxyl + 5'-phospho-(deoxyribonucleotide)m = (deoxyribonucleotide)n+m + AMP + beta-nicotinamide D-nucleotide.. In terms of biological role, catalyzes the formation of phosphodiester linkages between 5'-phosphoryl and 3'-hydroxyl groups in double-stranded DNA using NAD as a coenzyme and as the energy source for the reaction. The polypeptide is DNA ligase B (Escherichia coli O17:K52:H18 (strain UMN026 / ExPEC)).